The following is a 451-amino-acid chain: UDP-N-acetylmuramate--L-alanine ligase (451 aa).

110–116 (GTHGKTT) contacts ATP.

It belongs to the MurCDEF family.

Its subcellular location is the cytoplasm. It carries out the reaction UDP-N-acetyl-alpha-D-muramate + L-alanine + ATP = UDP-N-acetyl-alpha-D-muramoyl-L-alanine + ADP + phosphate + H(+). Its pathway is cell wall biogenesis; peptidoglycan biosynthesis. Its function is as follows. Cell wall formation. The polypeptide is UDP-N-acetylmuramate--L-alanine ligase (Francisella tularensis subsp. holarctica (strain FTNF002-00 / FTA)).